The primary structure comprises 307 residues: MSIPDDKEAGTIDEFLQKEGVLDILQKLDHDLVGLKPVKDRVREIAALLVVDKLRSRLGLTGTTPSLHMAFTGSPGTGKTTVAMRMGQILKAMGYSRSGHLIVATRDDLVGQYVGHTAPKTKEVIKRAFGGVLFIDEAYYLYNAANDRDYGVEAIEILLNVMEEQREDLVVIFAGYEDRMNKFYSYIPGISSRIGNHISFPDYTLEELVDIAKVMVRDMEYRIADDAIPACRAYIEKRMQMPYFSNARTVRNLINRARMRSAIRIFNKAMDPNADGLVSRDELMTLITEDFPTVQELLERGETAIVE.

The transit peptide at 1 to 46 directs the protein to the chloroplast; sequence MSIPDDKEAGTIDEFLQKEGVLDILQKLDHDLVGLKPVKDRVREIA. Residue 73–80 coordinates ATP; that stretch reads GSPGTGKT.

Belongs to the CbxX/CfxQ family. In terms of assembly, forms homooligomers. Forms heterohexameric rings with the plastid-encoded Rca subunit consisting of 3 of each nuclear- and plastidial-encoded subunits that alternate in the ring.

Its subcellular location is the plastid. The protein localises to the chloroplast. In terms of biological role, required for the expression of ribulose 1,5-bisphosphate carboxylase/oxygenase (RuBisCo). ATPase involved in the activation of red-type RuBisCo, which tends to form inactive complexes with its substrate ribulose 1,5-bisphosphate (RuBP). Catalyzes the release of RuBP from inhibited RuBisCo in an ATP-dependent manner. Activation of RuBisCO involves the ATP-dependent carboxylation of the epsilon-amino group of lysine leading to a carbamate structure. The nuclear-encoded subunit plays a more critical role in activase function than the plastidial-encoded subunit. The sequence is that of Ribulose bisphosphate carboxylase/oxygenase activase, chloroplastic from Cyanidioschyzon merolae (strain NIES-3377 / 10D) (Unicellular red alga).